The chain runs to 293 residues: Diaminopimelate epimerase (293 aa).

The substrate site is built by Asn-11 and Asn-78. The Proton donor role is filled by Cys-87. Substrate-binding positions include 88–89 (GN), Asn-166, Asn-202, and 220–221 (ER). Cys-229 serves as the catalytic Proton acceptor. 230–231 (GT) lines the substrate pocket.

This sequence belongs to the diaminopimelate epimerase family. Homodimer.

It localises to the cytoplasm. It carries out the reaction (2S,6S)-2,6-diaminopimelate = meso-2,6-diaminopimelate. Its pathway is amino-acid biosynthesis; L-lysine biosynthesis via DAP pathway; DL-2,6-diaminopimelate from LL-2,6-diaminopimelate: step 1/1. Functionally, catalyzes the stereoinversion of LL-2,6-diaminopimelate (L,L-DAP) to meso-diaminopimelate (meso-DAP), a precursor of L-lysine and an essential component of the bacterial peptidoglycan. In Mycobacterium sp. (strain JLS), this protein is Diaminopimelate epimerase.